The primary structure comprises 266 residues: Glucosamine-6-phosphate deaminase (266 aa).

Asp72 serves as the catalytic Proton acceptor; for enolization step. Asp141 (for ring-opening step) is an active-site residue. His143 acts as the Proton acceptor; for ring-opening step in catalysis. Glu148 serves as the catalytic For ring-opening step.

The protein belongs to the glucosamine/galactosamine-6-phosphate isomerase family. NagB subfamily. Homohexamer.

It carries out the reaction alpha-D-glucosamine 6-phosphate + H2O = beta-D-fructose 6-phosphate + NH4(+). The protein operates within amino-sugar metabolism; N-acetylneuraminate degradation; D-fructose 6-phosphate from N-acetylneuraminate: step 5/5. Allosterically activated by N-acetylglucosamine 6-phosphate (GlcNAc6P). Its function is as follows. Catalyzes the reversible isomerization-deamination of glucosamine 6-phosphate (GlcN6P) to form fructose 6-phosphate (Fru6P) and ammonium ion. This Pectobacterium carotovorum subsp. carotovorum (strain PC1) protein is Glucosamine-6-phosphate deaminase.